Here is an 878-residue protein sequence, read N- to C-terminus: Phosphoenolpyruvate carboxylase (878 aa).

Active-site residues include histidine 140 and lysine 545.

It belongs to the PEPCase type 1 family. Mg(2+) serves as cofactor.

The catalysed reaction is oxaloacetate + phosphate = phosphoenolpyruvate + hydrogencarbonate. Forms oxaloacetate, a four-carbon dicarboxylic acid source for the tricarboxylic acid cycle. This Pseudomonas aeruginosa (strain ATCC 15692 / DSM 22644 / CIP 104116 / JCM 14847 / LMG 12228 / 1C / PRS 101 / PAO1) protein is Phosphoenolpyruvate carboxylase.